The following is a 418-amino-acid chain: Secernin-3 (418 aa).

Residues 1–5 (MEPYS) constitute a propeptide that is removed on maturation. C6 is an active-site residue. At C6 the chain carries Glyoxylic acid (Cys); alternate. Residue C6 is modified to Pyruvic acid (Cys); alternate.

It belongs to the peptidase C69 family. Secernin subfamily.

In terms of biological role, plays a role in thermal nociception. The polypeptide is Secernin-3 (Scrn3) (Mus musculus (Mouse)).